A 138-amino-acid polypeptide reads, in one-letter code: ATP synthase epsilon chain (138 aa).

This sequence belongs to the ATPase epsilon chain family. As to quaternary structure, F-type ATPases have 2 components, CF(1) - the catalytic core - and CF(0) - the membrane proton channel. CF(1) has five subunits: alpha(3), beta(3), gamma(1), delta(1), epsilon(1). CF(0) has three main subunits: a, b and c.

Its subcellular location is the cell inner membrane. Its function is as follows. Produces ATP from ADP in the presence of a proton gradient across the membrane. In Acidovorax ebreus (strain TPSY) (Diaphorobacter sp. (strain TPSY)), this protein is ATP synthase epsilon chain.